A 62-amino-acid polypeptide reads, in one-letter code: Large ribosomal subunit protein bL33 (62 aa).

It belongs to the bacterial ribosomal protein bL33 family.

The protein is Large ribosomal subunit protein bL33 of Porphyromonas gingivalis (strain ATCC 33277 / DSM 20709 / CIP 103683 / JCM 12257 / NCTC 11834 / 2561).